A 668-amino-acid chain; its full sequence is tRNA 5-methylaminomethyl-2-thiouridine biosynthesis bifunctional protein MnmC (668 aa).

Positions 1–245 (MKHYSIQPAN…KREMLCGVME (245 aa)) are tRNA (mnm(5)s(2)U34)-methyltransferase. The interval 270 to 668 (IGGGIASALL…LLKGKAVKAG (399 aa)) is FAD-dependent cmnm(5)s(2)U34 oxidoreductase.

It in the N-terminal section; belongs to the methyltransferase superfamily. tRNA (mnm(5)s(2)U34)-methyltransferase family. This sequence in the C-terminal section; belongs to the DAO family. FAD serves as cofactor.

The protein resides in the cytoplasm. It catalyses the reaction 5-aminomethyl-2-thiouridine(34) in tRNA + S-adenosyl-L-methionine = 5-methylaminomethyl-2-thiouridine(34) in tRNA + S-adenosyl-L-homocysteine + H(+). Functionally, catalyzes the last two steps in the biosynthesis of 5-methylaminomethyl-2-thiouridine (mnm(5)s(2)U) at the wobble position (U34) in tRNA. Catalyzes the FAD-dependent demodification of cmnm(5)s(2)U34 to nm(5)s(2)U34, followed by the transfer of a methyl group from S-adenosyl-L-methionine to nm(5)s(2)U34, to form mnm(5)s(2)U34. In Escherichia coli O9:H4 (strain HS), this protein is tRNA 5-methylaminomethyl-2-thiouridine biosynthesis bifunctional protein MnmC.